The chain runs to 357 residues: GDP-mannose transporter 2 (357 aa).

Residues 1 to 43 are Cytoplasmic-facing; the sequence is MASTRNGISKDELLPTYELQSQRDVENSGSVTSFASKISNNAA. The helical transmembrane segment at 44-64 threads the bilayer; the sequence is AAVLAYCLSSISMTLVNKYVV. At 65–68 the chain is on the lumenal side; sequence SGAS. Residues 69–89 form a helical membrane-spanning segment; sequence WNLSFLYLAIQSFIGTVAIMV. Over 90-107 the chain is Cytoplasmic; sequence CKKAGLIQNLGLFDLKKA. A helical membrane pass occupies residues 108–128; sequence QTWLPISLLLVGMIYTGNKAL. Residue glutamine 129 is a topological domain, lumenal. The chain crosses the membrane as a helical span at residues 130–150; that stretch reads FLSVPVYTIFKNLTIIVIAYG. Topologically, residues 151-161 are cytoplasmic; that stretch reads EVFMVGGSVKP. A helical transmembrane segment spans residues 162 to 182; the sequence is LALLSFGLMVLSSVVAAWADI. The Lumenal segment spans residues 183–196; sequence QIATAATAKASSDS. The helical transmembrane segment at 197 to 217 threads the bilayer; that stretch reads AVATLSALNAGYAWMGTNVVF. Residues 218 to 238 lie on the Cytoplasmic side of the membrane; sequence SASYALGMRRVIKKTNFDNWD. The helical transmembrane segment at 239-259 threads the bilayer; it reads VMFYNNLLSVPILLLSSLLVE. At 260 to 277 the chain is on the lumenal side; sequence DWSSENLQRNFPAESRQS. A helical transmembrane segment spans residues 278-298; it reads LVIGIFYSGVAAIFISYCTAW. Residues 299–306 lie on the Cytoplasmic side of the membrane; that stretch reads CVRATSST. Residues 307–327 form a helical membrane-spanning segment; the sequence is TYAMVGALNKLPLAVAGIVFF. Residues 328 to 332 are Lumenal-facing; it reads AAPVT. The helical transmembrane segment at 333-352 threads the bilayer; it reads FGSVSAIVLGFISGLVYTWA. Residues 353–357 are Cytoplasmic-facing; that stretch reads KSTGA.

It belongs to the TPT transporter family. SLC35D subfamily. Homooligomer.

It is found in the golgi apparatus membrane. The protein resides in the cytoplasmic vesicle membrane. The protein localises to the endoplasmic reticulum membrane. Functionally, involved in the import of GDP-mannose from the cytoplasm into the Golgi lumen. The protein is GDP-mannose transporter 2 (gmt2) of Emericella nidulans (strain FGSC A4 / ATCC 38163 / CBS 112.46 / NRRL 194 / M139) (Aspergillus nidulans).